The chain runs to 538 residues: Chaperonin GroEL (538 aa).

Residues 29–32 (TLGP), 86–90 (DGTTT), Gly413, 479–481 (DAL), and Asp495 each bind ATP.

Belongs to the chaperonin (HSP60) family. In terms of assembly, forms a cylinder of 14 subunits composed of two heptameric rings stacked back-to-back. Interacts with the co-chaperonin GroES.

The protein localises to the cytoplasm. The catalysed reaction is ATP + H2O + a folded polypeptide = ADP + phosphate + an unfolded polypeptide.. In terms of biological role, together with its co-chaperonin GroES, plays an essential role in assisting protein folding. The GroEL-GroES system forms a nano-cage that allows encapsulation of the non-native substrate proteins and provides a physical environment optimized to promote and accelerate protein folding. The sequence is that of Chaperonin GroEL from Thermotoga neapolitana.